Here is a 75-residue protein sequence, read N- to C-terminus: ATP synthase subunit c (75 aa).

2 helical membrane passes run isoleucine 9–phenylalanine 29 and phenylalanine 54–alanine 74.

The protein belongs to the ATPase C chain family. As to quaternary structure, F-type ATPases have 2 components, F(1) - the catalytic core - and F(0) - the membrane proton channel. F(1) has five subunits: alpha(3), beta(3), gamma(1), delta(1), epsilon(1). F(0) has three main subunits: a(1), b(2) and c(10-14). The alpha and beta chains form an alternating ring which encloses part of the gamma chain. F(1) is attached to F(0) by a central stalk formed by the gamma and epsilon chains, while a peripheral stalk is formed by the delta and b chains.

It is found in the cell inner membrane. Its function is as follows. F(1)F(0) ATP synthase produces ATP from ADP in the presence of a proton or sodium gradient. F-type ATPases consist of two structural domains, F(1) containing the extramembraneous catalytic core and F(0) containing the membrane proton channel, linked together by a central stalk and a peripheral stalk. During catalysis, ATP synthesis in the catalytic domain of F(1) is coupled via a rotary mechanism of the central stalk subunits to proton translocation. Functionally, key component of the F(0) channel; it plays a direct role in translocation across the membrane. A homomeric c-ring of between 10-14 subunits forms the central stalk rotor element with the F(1) delta and epsilon subunits. This is ATP synthase subunit c from Pelagibacter ubique (strain HTCC1062).